The sequence spans 220 residues: Iron-sulfur cluster repair protein YtfE (220 aa).

The protein belongs to the RIC family. YtfE subfamily. In terms of assembly, homodimer.

It is found in the cytoplasm. Functionally, di-iron-containing protein involved in the repair of iron-sulfur clusters damaged by oxidative and nitrosative stress conditions. This is Iron-sulfur cluster repair protein YtfE from Citrobacter koseri (strain ATCC BAA-895 / CDC 4225-83 / SGSC4696).